An 84-amino-acid chain; its full sequence is Small ribosomal subunit protein uS17 (84 aa).

The protein belongs to the universal ribosomal protein uS17 family. Part of the 30S ribosomal subunit.

Functionally, one of the primary rRNA binding proteins, it binds specifically to the 5'-end of 16S ribosomal RNA. The chain is Small ribosomal subunit protein uS17 from Glaesserella parasuis serovar 5 (strain SH0165) (Haemophilus parasuis).